The following is a 128-amino-acid chain: Cytochrome c-type biogenesis protein CcmE (128 aa).

Topologically, residues 1-8 are cytoplasmic; it reads MQKIVRNR. Residues 9–29 traverse the membrane as a helical; Signal-anchor for type II membrane protein segment; the sequence is LIKIIICFCSACLGISIILYN. The Periplasmic segment spans residues 30-128; sequence LEKNIIFFFP…KHDENYRPPS (99 aa). H120 and Y124 together coordinate heme.

Belongs to the CcmE/CycJ family.

It localises to the cell inner membrane. Heme chaperone required for the biogenesis of c-type cytochromes. Transiently binds heme delivered by CcmC and transfers the heme to apo-cytochromes in a process facilitated by CcmF and CcmH. This chain is Cytochrome c-type biogenesis protein CcmE, found in Rickettsia prowazekii (strain Madrid E).